A 256-amino-acid polypeptide reads, in one-letter code: Probable galactose dehydrogenase GalD (256 aa).

Residues G20 to S23, D71 to L72, and N98 contribute to the NAD(+) site. Position 150 (S150) interacts with substrate. The active-site Proton acceptor is the Y163. Residues Y163–K167 and I196 contribute to the NAD(+) site.

Belongs to the short-chain dehydrogenases/reductases (SDR) family.

In terms of biological role, involved in the degradation of galactose via the DeLey-Doudoroff pathway. Catalyzes the oxidation of galactose in the presence of NAD(+). Uses NAD(+) as a hydrogen acceptor more efficiently than NADP(+). This chain is Probable galactose dehydrogenase GalD (galD), found in Rhizobium meliloti (strain 1021) (Ensifer meliloti).